A 216-amino-acid chain; its full sequence is Adenylate kinase (216 aa).

Residue 10-15 participates in ATP binding; it reads GAGKGT. The segment at 30–59 is NMP; sequence STGDILRENVKKGTALGLKAKSYMDKGELV. Residues Thr-31, Arg-36, 57 to 59, 85 to 88, and Gln-92 contribute to the AMP site; these read ELV and GFPR. The interval 126–163 is LID; sequence GRRICRSCGASYHLVFNPPKAKDLCDSCGGELYQRDDD. Residue Arg-127 coordinates ATP. Positions 130 and 133 each coordinate Zn(2+). Position 136-137 (136-137) interacts with ATP; that stretch reads SY. Zn(2+) contacts are provided by Cys-150 and Cys-153. AMP is bound by residues Arg-160 and Arg-171. Lys-199 is an ATP binding site.

It belongs to the adenylate kinase family. As to quaternary structure, monomer.

The protein resides in the cytoplasm. The enzyme catalyses AMP + ATP = 2 ADP. The protein operates within purine metabolism; AMP biosynthesis via salvage pathway; AMP from ADP: step 1/1. Its function is as follows. Catalyzes the reversible transfer of the terminal phosphate group between ATP and AMP. Plays an important role in cellular energy homeostasis and in adenine nucleotide metabolism. In Methanocella arvoryzae (strain DSM 22066 / NBRC 105507 / MRE50), this protein is Adenylate kinase.